We begin with the raw amino-acid sequence, 172 residues long: Chromosome-anchoring protein RacA (172 aa).

A DNA-binding region (H-T-H motif) is located at residues 5–25 (TSDVAIRLGVSPKTIQRWVRK). Disordered regions lie at residues 57-76 (AAME…RNNI) and 142-172 (QLNN…GLFA). The span at 62–71 (PPTPKRPPTP) shows a compositional bias: pro residues. The stretch at 83–146 (ESIEPEIARV…ARLEQQLNNR (64 aa)) forms a coiled coil. Polar residues predominate over residues 142 to 151 (QLNNRPPSSH).

Belongs to the RacA family.

It is found in the cytoplasm. Required for the formation of axial filaments and for anchoring the origin regions at the cell poles in sporulating cells, thus ensuring proper chromosome segregation in the prespore. Binds in a dispersed manner throughout the chromosome but preferentially to sites clustered in the origin portion of the chromosome, causing condensation of the chromosome and its remodeling into an elongated, anchored structure. The polypeptide is Chromosome-anchoring protein RacA (Geobacillus kaustophilus (strain HTA426)).